The following is a 1147-amino-acid chain: Myosin light chain kinase, smooth muscle (1147 aa).

An actin-binding region spans residues 1–41 (MDFRANLQRQVKPKTVSEEERKVHSPQQVDFRSVLAKKGTP). A disordered region spans residues 1–330 (MDFRANLQRQ…PPASPGTAPT (330 aa)). The calmodulin-binding stretch occupies residues 26-41 (PQQVDFRSVLAKKGTP). The span at 43–55 (TPVPEKAPPPKPA) shows a compositional bias: pro residues. Repeat copies occupy residues 100–111 (SLKPVANAKPAE) and 112–123 (TLKPVANTKPAE). Positions 100-288 (SLKPVANAKP…KAVANAKPAE (189 aa)) are 16 X 12 AA tandem repeats. One copy of the 3; truncated repeat lies at 124-132 (TLKPVANAE). 13 consecutive repeat copies span residues 133–144 (TLKPMGNAKPAE), 145–156 (SSKPVGNTKPAE), 157–168 (TLKPVGNTKPAE), 169–180 (TLKPVGNIKPAE), 181–192 (TLKPVGNIKPAE), 193–204 (TLKPVGNTKPTE), 205–216 (TLKPVANAKSAE), 217–228 (TLKPIANTKPAE), 229–240 (TLKPVGNAKPAE), 241–252 (TLKPVGNAKPAE), 253–264 (TLKPVGNAKPAE), 265–276 (TLKPVGNAKPAE), and 277–288 (TLKAVANAKPAE). The tract at residues 292-692 (PAGKEELKKE…TVTVNTEQKV (401 aa)) is actin-binding (calcium/calmodulin-insensitive). Residues 293-320 (AGKEELKKEVQNDVNCKREKAGAADNEK) show a composition bias toward basic and acidic residues. 2 consecutive Ig-like C2-type domains span residues 329–417 (PTFK…CHVT) and 469–557 (PQIP…VNLT). Cysteine 350 and cysteine 401 are oxidised to a cystine. Disordered regions lie at residues 424–476 (SENA…QFPE) and 644–678 (SEPS…KEPE). Residues 459-472 (PKTPPKAATPPQIP) are compositionally biased toward pro residues. The Fibronectin type-III domain occupies 565 to 657 (PAGTPCASDI…QESELTTVGE (93 aa)). Residues 644 to 653 (SEPSQESELT) are compositionally biased toward polar residues. Positions 662–677 (PKDEVEEVSDDDEKEP) are enriched in acidic residues. The residue at position 670 (serine 670) is a Phosphoserine. Tyrosine 681 is modified (phosphotyrosine; by ABL1). Residues 696–951 (YDIEERLGSG…CTQCLQHPWL (256 aa)) enclose the Protein kinase domain. ATP-binding positions include 702–710 (LGSGKFGQV) and lysine 725. Tyrosine 807 bears the Phosphotyrosine; by ABL1 mark. The Proton acceptor role is filled by aspartate 817. A Phosphotyrosine; by ABL1 modification is found at tyrosine 867. The segment at 943 to 1006 (TQCLQHPWLM…SGLSGRKSST (64 aa)) is calmodulin-binding. Serine 991, serine 992, serine 1004, serine 1005, and serine 1008 each carry phosphoserine. Residues 999–1019 (LSGRKSSTGSPTSPLTAERLE) are disordered. The span at 1002-1013 (RKSSTGSPTSPL) shows a compositional bias: polar residues. The residue at position 1010 (threonine 1010) is a Phosphothreonine. Serine 1011 bears the Phosphoserine mark. An Ig-like C2-type 3 domain is found at 1041-1130 (PYFSKTIRDL…GEATCTAELI (90 aa)). Cysteine 1062 and cysteine 1114 are joined by a disulfide.

The protein belongs to the protein kinase superfamily. CAMK Ser/Thr protein kinase family. In terms of assembly, all isoforms including Telokin bind calmodulin. Interacts with SVIL. Interacts with CTTN; this interaction is reduced during thrombin-induced endothelial cell (EC) contraction but is promoted by the barrier-protective agonist sphingosine 1-phosphate (S1P) within lamellipodia. A complex made of ABL1, CTTN and MYLK regulates cortical actin-based cytoskeletal rearrangement critical to sphingosine 1-phosphate (S1P)-mediated endothelial cell (EC) barrier enhancement. Binds to NAA10/ARD1 and PTK2B/PYK2. Mg(2+) serves as cofactor. The cofactor is Ca(2+). In terms of processing, the C-terminus is deglutamylated by AGTPBP1/CCP1, AGBL1/CCP4 and AGBL4/CCP6, leading to the formation of Myosin light chain kinase, smooth muscle, deglutamylated form. The consequences of C-terminal deglutamylation are unknown. Can probably be down-regulated by phosphorylation. Tyrosine phosphorylation by ABL1 increases kinase activity, reverses MLCK-mediated inhibition of Arp2/3-mediated actin polymerization, and enhances CTTN-binding. Phosphorylation by SRC promotes CTTN binding. As to expression, isoform Telokin is found in all smooth muscle tested except the aorta. It is not present in non-muscle tissue.

The protein resides in the cytoplasm. It is found in the cell projection. The protein localises to the lamellipodium. It localises to the cleavage furrow. Its subcellular location is the cytoskeleton. The protein resides in the stress fiber. It catalyses the reaction L-seryl-[myosin light chain] + ATP = O-phospho-L-seryl-[myosin light chain] + ADP + H(+). It carries out the reaction L-threonyl-[myosin light chain] + ATP = O-phospho-L-threonyl-[myosin light chain] + ADP + H(+). With respect to regulation, all catalytically active isoforms require binding to calcium and calmodulin for activation. Its function is as follows. Calcium/calmodulin-dependent myosin light chain kinase implicated in smooth muscle contraction via phosphorylation of myosin light chains (MLC). Also regulates actin-myosin interaction through a non-kinase activity. Phosphorylates PTK2B/PYK2 and myosin light-chains. Involved in the inflammatory response (e.g. apoptosis, vascular permeability, leukocyte diapedesis), cell motility and morphology, airway hyperreactivity and other activities relevant to asthma. Required for tonic airway smooth muscle contraction that is necessary for physiological and asthmatic airway resistance. Necessary for gastrointestinal motility. Implicated in the regulation of endothelial as well as vascular permeability, probably via the regulation of cytoskeletal rearrangements. In the nervous system it has been shown to control the growth initiation of astrocytic processes in culture and to participate in transmitter release at synapses formed between cultured sympathetic ganglion cells. Critical participant in signaling sequences that result in fibroblast apoptosis. Plays a role in the regulation of epithelial cell survival. Required for epithelial wound healing, especially during actomyosin ring contraction during purse-string wound closure. Mediates RhoA-dependent membrane blebbing. Triggers TRPC5 channel activity in a calcium-dependent signaling, by inducing its subcellular localization at the plasma membrane. Promotes cell migration (including tumor cells) and tumor metastasis. PTK2B/PYK2 activation by phosphorylation mediates ITGB2 activation and is thus essential to trigger neutrophil transmigration during acute lung injury (ALI). May regulate optic nerve head astrocyte migration. Probably involved in mitotic cytoskeletal regulation. Regulates tight junction probably by modulating ZO-1 exchange in the perijunctional actomyosin ring. Mediates burn-induced microvascular barrier injury; triggers endothelial contraction in the development of microvascular hyperpermeability by phosphorylating MLC. Essential for intestinal barrier dysfunction. Mediates Giardia spp.-mediated reduced epithelial barrier function during giardiasis intestinal infection via reorganization of cytoskeletal F-actin and tight junctional ZO-1. Necessary for hypotonicity-induced Ca(2+) entry and subsequent activation of volume-sensitive organic osmolyte/anion channels (VSOAC) in cervical cancer cells. The protein is Myosin light chain kinase, smooth muscle (MYLK) of Oryctolagus cuniculus (Rabbit).